Consider the following 284-residue polypeptide: Protease HtpX (284 aa).

The next 2 membrane-spanning stretches (helical) occupy residues 4–24 and 33–53; these read ILLFLATNAAVLIVFNIILSL and MGLLIMAALFGFTGSIISLLM. Histidine 139 is a binding site for Zn(2+). Glutamate 140 is a catalytic residue. Zn(2+) is bound at residue histidine 143. Helical transmembrane passes span 147–167 and 187–207; these read GDMVTMTLLQGVLNTFVIFAA and IYFLVAMVLEVVFGFLASMIA. Glutamate 215 is a Zn(2+) binding site.

It belongs to the peptidase M48B family. Requires Zn(2+) as cofactor.

The protein localises to the cell inner membrane. This chain is Protease HtpX, found in Mannheimia succiniciproducens (strain KCTC 0769BP / MBEL55E).